The primary structure comprises 317 residues: Neurogenic differentiation factor 6-B (317 aa).

Disordered regions lie at residues 1–90 (MLTV…ERSR) and 297–317 (DLHPRSQSFQSQDELNTGYHN). Residues 37 to 56 (EAEDDNTDREEEEEREEDEN) show a composition bias toward acidic residues. The span at 59–69 (PKKKGPRKKKS) shows a compositional bias: basic residues. Positions 65-70 (RKKKSE) match the Nuclear localization signal motif. Residues 70-90 (EGRGDRVKMRRQEANARERSR) are compositionally biased toward basic and acidic residues. In terms of domain architecture, bHLH spans 78 to 130 (MRRQEANARERSRMHGLNDALESLRKVVPCYSKTQKLSKIETLRLAKNYIWAL). The span at 301–317 (RSQSFQSQDELNTGYHN) shows a compositional bias: polar residues.

As to quaternary structure, efficient DNA binding requires dimerization with another bHLH protein. Embryonic olfactory bulbs and olfactory placodes. In adult, expressed in brain and eye.

It localises to the nucleus. Functionally, differentiation factor required for neurogenesis. Does not act as an upstream activator of isl1. The protein is Neurogenic differentiation factor 6-B of Danio rerio (Zebrafish).